A 200-amino-acid chain; its full sequence is Small ribosomal subunit protein uS4 (200 aa).

The segment at 22-42 (TGKELEKRPYAPGPHGPNQRK) is disordered. In terms of domain architecture, S4 RNA-binding spans 92 to 152 (ARLDNLVYRM…EKSNNLVVVK (61 aa)).

It belongs to the universal ribosomal protein uS4 family. As to quaternary structure, part of the 30S ribosomal subunit. Contacts protein S5. The interaction surface between S4 and S5 is involved in control of translational fidelity.

Its function is as follows. One of the primary rRNA binding proteins, it binds directly to 16S rRNA where it nucleates assembly of the body of the 30S subunit. In terms of biological role, with S5 and S12 plays an important role in translational accuracy. The sequence is that of Small ribosomal subunit protein uS4 from Bacillus cereus (strain Q1).